The following is a 217-amino-acid chain: Probable GTP-binding protein EngB (217 aa).

Positions 37–214 (AGVEVAFAGR…RAAMARLIGE (178 aa)) constitute an EngB-type G domain. GTP is bound by residues 45–52 (GRSNVGKS), 72–76 (GRTQE), 92–95 (DMPG), 159–162 (TKAD), and 193–195 (TSS). Mg(2+) is bound by residues Ser-52 and Thr-74.

Belongs to the TRAFAC class TrmE-Era-EngA-EngB-Septin-like GTPase superfamily. EngB GTPase family. Mg(2+) is required as a cofactor.

Functionally, necessary for normal cell division and for the maintenance of normal septation. In Nitrobacter hamburgensis (strain DSM 10229 / NCIMB 13809 / X14), this protein is Probable GTP-binding protein EngB.